Here is a 404-residue protein sequence, read N- to C-terminus: Tryptophan synthase beta chain (404 aa).

Position 99 is an N6-(pyridoxal phosphate)lysine (Lys-99).

The protein belongs to the TrpB family. As to quaternary structure, tetramer of two alpha and two beta chains. Pyridoxal 5'-phosphate is required as a cofactor.

It catalyses the reaction (1S,2R)-1-C-(indol-3-yl)glycerol 3-phosphate + L-serine = D-glyceraldehyde 3-phosphate + L-tryptophan + H2O. It functions in the pathway amino-acid biosynthesis; L-tryptophan biosynthesis; L-tryptophan from chorismate: step 5/5. In terms of biological role, the beta subunit is responsible for the synthesis of L-tryptophan from indole and L-serine. The chain is Tryptophan synthase beta chain from Rhizobium rhizogenes (strain K84 / ATCC BAA-868) (Agrobacterium radiobacter).